A 902-amino-acid polypeptide reads, in one-letter code: MNKHLSGSQIRQIWLDFFKSKKHEIIESKSLVPINDPSLLWINAGVATLKKYFSGEENPINPRLANSQRCIRANDIENVGVTSRHHTVFEMLGNFSIGDYFKKEAIEFGYELLTKFYGLNKDKLYITIYEDDNDAFNYWVGQGINPHHIIRCDRKRNFWDLGSGPCGPSTEIYYDRGEKYDPNKLGEKLFFEDIENDRYIEVWNIVFSQFNNTGNNNYTELLRKNIDTGASLERFACILQDVPTNYDTDLYLPIIRTIEKHTNHKYVVDHYFSKDQSEQDVLRAFRVIADHLKCGVFAIADGVLPGAKDRDYIIRKLLRRAFVYAKKLNAKPEYLVETINVIINTYSDFFKYLIPNKEIVIQAITNEANNFTKTLDYGFEIFNEAKTTNNITAETIFKLVETYGFPLDLIKELSAEAKIKLDLDGFEELFKKHQEISKANNGEVGLKKQNENLLKFKTPSKFFYDKNNIKTKVVAIFDDKFNPVDQIEVGSGWAVFESTPIYATSGGQRFDEGYCLKKGNLVVHFDNVIKAPNKQHLHHFKKASFWLNEKVELMHDENWRKLVRKNHSLEHILHATLKNTISETIKQSGAFKSAAKATLDFNYPTRLTDEDLDKIETKMRQVIADKIPVTVHHVDYETSQKMNAIAYFEEEYKKHELLRVIKIGDYSVELCGGTHVDNTKEIEECFITNLYSLGAGRWRIEIMSSYETIYNYLVDKQNEIKQEKDHMFNELGNYDLTHYLDFSKKLHSFNLPNSIKDLRKTLRAFEQIKEEYKAIKLELDKKKTKDRANQIKKLALDNLEHKIVLLFFDKEEHKALSIAHSELVNEKPDHLFFFINKSDNKINYLIGIKNATYKLNAKLLIDKVNAMFGAKGGGKQNFAQGGFSTDKDVGKLKADFVNICIT.

Zn(2+)-binding residues include histidine 567, histidine 571, cysteine 671, and histidine 675.

This sequence belongs to the class-II aminoacyl-tRNA synthetase family. Zn(2+) is required as a cofactor.

The protein resides in the cytoplasm. It carries out the reaction tRNA(Ala) + L-alanine + ATP = L-alanyl-tRNA(Ala) + AMP + diphosphate. Functionally, catalyzes the attachment of alanine to tRNA(Ala) in a two-step reaction: alanine is first activated by ATP to form Ala-AMP and then transferred to the acceptor end of tRNA(Ala). Also edits incorrectly charged Ser-tRNA(Ala) and Gly-tRNA(Ala) via its editing domain. This Mycoplasmoides gallisepticum (strain R(low / passage 15 / clone 2)) (Mycoplasma gallisepticum) protein is Alanine--tRNA ligase.